The primary structure comprises 402 residues: Homoserine O-acetyltransferase (402 aa).

The span at 1–17 (MDWQTTSADTAPSSFIT) shows a compositional bias: polar residues. A disordered region spans residues 1–39 (MDWQTTSADTAPSSFITEEQDRSLFGKPPASGAWKESDP). Positions 78-388 (NAVLVLHALT…HFGHDGFLIE (311 aa)) constitute an AB hydrolase-1 domain. The active-site Nucleophile is the Ser-183. Arg-255 lines the substrate pocket. Residues Asp-349 and His-382 contribute to the active site. Asp-383 is a substrate binding site.

It belongs to the AB hydrolase superfamily. MetX family. As to quaternary structure, homodimer.

Its subcellular location is the cytoplasm. It carries out the reaction L-homoserine + acetyl-CoA = O-acetyl-L-homoserine + CoA. It participates in amino-acid biosynthesis; L-methionine biosynthesis via de novo pathway; O-acetyl-L-homoserine from L-homoserine: step 1/1. Its function is as follows. Transfers an acetyl group from acetyl-CoA to L-homoserine, forming acetyl-L-homoserine. The polypeptide is Homoserine O-acetyltransferase (Leifsonia xyli subsp. xyli (strain CTCB07)).